A 400-amino-acid chain; its full sequence is Serine/threonine transporter SstT (400 aa).

Transmembrane regions (helical) follow at residues 14-34 (IIIA…VTPY), 48-68 (SVAP…FQVG), 76-96 (VLLL…IASL), 136-156 (AISE…GLAM), 177-197 (IIHK…AVTF), 211-231 (LLVV…PILV), 285-305 (IPLG…VLTL), 311-331 (LGIH…TISA), and 349-371 (CSLF…IISV).

The protein belongs to the dicarboxylate/amino acid:cation symporter (DAACS) (TC 2.A.23) family.

It is found in the cell inner membrane. It carries out the reaction L-serine(in) + Na(+)(in) = L-serine(out) + Na(+)(out). It catalyses the reaction L-threonine(in) + Na(+)(in) = L-threonine(out) + Na(+)(out). Its function is as follows. Involved in the import of serine and threonine into the cell, with the concomitant import of sodium (symport system). The chain is Serine/threonine transporter SstT from Acinetobacter baumannii (strain AB307-0294).